The sequence spans 195 residues: dTTP/UTP pyrophosphatase (195 aa).

Asp-70 serves as the catalytic Proton acceptor.

This sequence belongs to the Maf family. YhdE subfamily. A divalent metal cation serves as cofactor.

It localises to the cytoplasm. The enzyme catalyses dTTP + H2O = dTMP + diphosphate + H(+). It carries out the reaction UTP + H2O = UMP + diphosphate + H(+). In terms of biological role, nucleoside triphosphate pyrophosphatase that hydrolyzes dTTP and UTP. May have a dual role in cell division arrest and in preventing the incorporation of modified nucleotides into cellular nucleic acids. The sequence is that of dTTP/UTP pyrophosphatase from Photorhabdus laumondii subsp. laumondii (strain DSM 15139 / CIP 105565 / TT01) (Photorhabdus luminescens subsp. laumondii).